The following is a 247-amino-acid chain: E3 SUMO-protein ligase NSE2 (247 aa).

The residue at position 1 (Met1) is an N-acetylmethionine. Residues Lys90 and Lys107 each participate in a glycyl lysine isopeptide (Lys-Gly) (interchain with G-Cter in SUMO2) cross-link. A Phosphoserine modification is found at Ser116. Glycyl lysine isopeptide (Lys-Gly) (interchain with G-Cter in SUMO2) cross-links involve residues Lys125 and Lys130. The segment at 154–240 (VDEDMIVTQS…LRRAIESHNK (87 aa)) adopts an SP-RING-type zinc-finger fold. Cys185, His187, Cys210, and Cys215 together coordinate Zn(2+).

This sequence belongs to the NSE2 family. Component of the SMC5-SMC6 complex which consists at least of SMC5, SMC6, NSMCE2, NSMCE1, NSMCE4A or EID3 and NSMCE3. Sumoylated, possibly via autosumoylation.

The protein resides in the nucleus. It is found in the chromosome. The protein localises to the telomere. Its subcellular location is the PML body. It participates in protein modification; protein sumoylation. Functionally, E3 SUMO-protein ligase component of the SMC5-SMC6 complex, a complex involved in DNA double-strand break repair by homologous recombination. Is not be required for the stability of the complex. The complex may promote sister chromatid homologous recombination by recruiting the SMC1-SMC3 cohesin complex to double-strand breaks. Acts as an E3 ligase mediating SUMO attachment to various proteins such as SMC6L1 and TSNAX, the shelterin complex subunits TERF1, TERF2, TINF2 and TERF2IP, RAD51AP1, and maybe the cohesin components RAD21 and STAG2. Required for recruitment of telomeres to PML nuclear bodies. Required for sister chromatid cohesion during prometaphase and mitotic progression. The chain is E3 SUMO-protein ligase NSE2 (Nsmce2) from Mus musculus (Mouse).